The sequence spans 254 residues: L-rhamnose 1-dehydrogenase (NAD(P)(+)) (254 aa).

NADP(+)-binding residues include glycine 13, serine 15, isoleucine 18, aspartate 64, valine 65, and asparagine 91. The active-site Proton donor is serine 144. Beta-L-rhamnose contacts are provided by serine 144, serine 146, glutamine 154, and tyrosine 157. Residues tyrosine 157 and lysine 161 each coordinate NADP(+). The active-site Proton acceptor is tyrosine 157. Lysine 161 serves as the catalytic Lowers pKa of active site Tyr. Threonine 189 provides a ligand contact to beta-L-rhamnose. Isoleucine 190 contacts NADP(+). Asparagine 195 contacts beta-L-rhamnose.

It belongs to the short-chain dehydrogenases/reductases (SDR) family.

The catalysed reaction is L-rhamnofuranose + NAD(+) = L-rhamnono-1,4-lactone + NADH + H(+). It catalyses the reaction L-rhamnofuranose + NADP(+) = L-rhamnono-1,4-lactone + NADPH + H(+). It participates in carbohydrate degradation; L-rhamnose degradation. Functionally, NAD(P)-dependent dehydrogenase that catalyzes the oxidation of L-rhamnose to L-rhamnono-1,4-lactone. Also shows high activity with L-lyxose and low activity with L-mannose. Can utilize either NAD(+) or NADP(+), with a slight preference for NADP(+). Catalyzes the first step in an alternative pathway for rhamnose utilization that does not involve phosphorylated intermediates. The sequence is that of L-rhamnose 1-dehydrogenase (NAD(P)(+)) from Sphingomonas sp. (strain SKA58).